Consider the following 389-residue polypeptide: Methylthioribose kinase (389 aa).

ATP is bound by residues N37, K52, and 106–108 (EDL). D224 is a binding site for substrate. Residue 241–243 (DPE) coordinates ATP. R331 contacts substrate.

The protein belongs to the methylthioribose kinase family. In terms of assembly, homodimer.

The catalysed reaction is 5-(methylsulfanyl)-D-ribose + ATP = 5-(methylsulfanyl)-alpha-D-ribose 1-phosphate + ADP + H(+). It participates in amino-acid biosynthesis; L-methionine biosynthesis via salvage pathway; S-methyl-5-thio-alpha-D-ribose 1-phosphate from S-methyl-5'-thioadenosine (hydrolase route): step 2/2. Catalyzes the phosphorylation of methylthioribose into methylthioribose-1-phosphate. This is Methylthioribose kinase from Exiguobacterium sibiricum (strain DSM 17290 / CCUG 55495 / CIP 109462 / JCM 13490 / 255-15).